The primary structure comprises 994 residues: Chloride channel protein 1 (994 aa).

At 1 to 118 (MERSQSQRHG…VLRRKLGEDW (118 aa)) the chain is on the cytoplasmic side. Residues 119–150 (IFLVLLGLLMALVSWCMDYVSAKSLQAYKWTY) form a helical membrane-spanning segment. Topologically, residues 151–158 (AQMKPSLP) are extracellular. The chain crosses the membrane as a helical span at residues 159–179 (LQYLAWVTFPLILILFSALFC). The Cytoplasmic portion of the chain corresponds to 180–183 (QLIS). The note=Loop between two helices intramembrane region spans 184–189 (PQAVGS). Positions 188 to 192 (GSGIP) match the Selectivity filter part_1 motif. Serine 189 is a chloride binding site. Positions 190 to 195 (GIPEMK) form an intramembrane region, helical. The Cytoplasmic portion of the chain corresponds to 196 to 208 (TILRGVVLKEYLT). Positions 209-224 (LKAFVAKVVALTAGLG) form an intramembrane region, helical. Positions 225–230 (SGIPVG) form an intramembrane region, note=Loop between two helices. The Selectivity filter part_2 motif lies at 230-234 (GKEGP). Positions 231–246 (KEGPFVHIASICAAVL) form an intramembrane region, helical. Residues 247-268 (SKFMSMFSGVYEQPYYYTDILT) lie on the Cytoplasmic side of the membrane. 2 intramembrane regions (helical) span residues 269 to 280 (VGCAVGVGCCFG) and 281 to 290 (TPLGGVLFSI). Topologically, residues 291 to 301 (EVTSTYFAVRN) are cytoplasmic. Residues 302-321 (YWRGFFAATFSAFVFRVLAV) traverse the membrane as a helical segment. Residues 322–347 (WNKDAVTITALFRTNFRMDFPFDLKE) are Extracellular-facing. Residues 348-376 (LPAFAVIGICCGFLGAVFVYLHRQVMLGV) form a helical membrane-spanning segment. Over 377–390 (RKHKCLSQFLAKHR) the chain is Cytoplasmic. The chain crosses the membrane as a helical span at residues 391–408 (LLYPGIVTFVIASLTFPP). Topologically, residues 409–414 (GMGQFM) are extracellular. Positions 415–418 (AGEL) form an intramembrane region, note=Loop between two helices. Positions 419–426 (MPREAIST) form an intramembrane region, helical. The Extracellular portion of the chain corresponds to 427 to 457 (LFDNNTWVKHIGDPQSLGQSAVWLHPQVNVI). Residues 458 to 475 (IIILLFFVMKFWMSIVAT) constitute an intramembrane region (helical). The segment at residues 476–482 (TMPIPCG) is an intramembrane region (note=Loop between two helices). A Selectivity filter part_3 motif is present at residues 482 to 486 (GGFMP). Residues 483–498 (GFMPVFVLGAAFGRLV) constitute an intramembrane region (helical). Residue phenylalanine 484 coordinates chloride. Residues 499–521 (GEIMAMLFPEGILFDDIIYKILP) are Extracellular-facing. The segment at residues 522–538 (GGYAVIGAAALTGAVSH) is an intramembrane region (helical). Residues 539–540 (TV) constitute an intramembrane region (note=Loop between two helices). Residues 541–554 (STAVICFELTGQIA) constitute an intramembrane region (helical). Residues 555 to 557 (HIL) lie on the Extracellular side of the membrane. Residues 558-571 (PMMVAVILANMVAQ) constitute an intramembrane region (helical). The note=Loop between two helices intramembrane region spans 572 to 575 (SLQP). An intramembrane region (helical) is located at residues 576 to 578 (SLY). Tyrosine 578 contributes to the chloride binding site. Over 579-994 (DSIIQVKKLP…DEEDEDELIL (416 aa)) the chain is Cytoplasmic. The CBS 1 domain occupies 609-668 (MVRDVKFVSASCTYGELRNLLQATTVKTLPLVDSKDSMILLGSVERSELQSLLQRHLCAE). A disordered region spans residues 710-770 (EDEDEDLSRK…PEASDSADQR (61 aa)). Over residues 725–739 (TPAPPPPSPPPPPSQ) the composition is skewed to pro residues. The region spanning 827-882 (IDQSPFQLVEQTTLHKTHTLFSLLGLHLAYVTSMGKLRGVLALEELQKAIEGHTKS) is the CBS 2 domain. 2 disordered regions span residues 886–954 (LRPP…ARAE) and 971–994 (ELAD…ELIL). Serine 892 carries the post-translational modification Phosphoserine. Residues 933–943 (PETPVPPPSPE) show a composition bias toward pro residues. Acidic residues predominate over residues 985-994 (DEEDEDELIL).

The protein belongs to the chloride channel (TC 2.A.49) family. ClC-1/CLCN1 subfamily. Homodimer. In terms of tissue distribution, predominantly expressed in skeletal muscles.

The protein resides in the cell membrane. The protein localises to the sarcolemma. Its subcellular location is the T-tubule. The enzyme catalyses chloride(in) = chloride(out). It carries out the reaction thiocyanate(in) = thiocyanate(out). It catalyses the reaction bromide(in) = bromide(out). The catalysed reaction is nitrate(in) = nitrate(out). The enzyme catalyses iodide(out) = iodide(in). With respect to regulation, modulated by membrane voltage with depolarization favouring channel opening and hyperpolarization favouring channel closure. Inhibited by acidic pH and ATP binding due to a shift of voltage dependence of common gating to more positive voltages. Inhibited by 9-anthracene-carboxylic. Functionally, voltage-gated chloride channel involved in skeletal muscle excitability. Generates most of the plasma membrane chloride conductance in skeletal muscle fibers, stabilizes the resting membrane potential and contributes to the repolarization phase during action potential firing. Forms a homodimeric channel where each subunit has its own ion conduction pathway. Conducts double-barreled currents controlled by two types of gates, two fast glutamate gates that control each subunit independently and a slow common gate that opens and shuts off both subunits simultaneously. Has a significant open probability at muscle resting potential and is further activated upon membrane depolarization. Permeable to small monovalent anions with ion selectivity for chloride &gt; thiocyanate &gt; bromide &gt; nitrate &gt; iodide. This Mus musculus (Mouse) protein is Chloride channel protein 1 (Clcn1).